Consider the following 719-residue polypeptide: DNA replication licensing factor MCM7 (719 aa).

Alanine 2 is subject to N-acetylalanine. Residues lysine 15 and lysine 28 each participate in a glycyl lysine isopeptide (Lys-Gly) (interchain with G-Cter in SUMO2) cross-link. Serine 314 is subject to Phosphoserine. An MCM domain is found at 332–538 (FYEKLAASIA…NDLRLAQHIT (207 aa)). Residue tyrosine 345 coordinates ATP. Serine 365 is subject to Phosphoserine. Glycine 384, alanine 386, lysine 387, serine 388, and asparagine 489 together coordinate ATP. At serine 500 the chain carries Phosphoserine. The Arginine finger motif lies at 513 to 516 (SRFD). Residue arginine 514 participates in ATP binding. The interaction with RAD17 stretch occupies residues 521 to 564 (IQDRPDRDNDLRLAQHITYVHQHSRQPPAQFEPLDMKLMRRYIA). An interaction with ATRIP region spans residues 577–719 (LADYITAAYV…NTSRTRITFV (143 aa)). Arginine 604 serves as a coordination point for ATP. Serine 678 carries the post-translational modification Phosphoserine.

It belongs to the MCM family. Component of the MCM2-7 complex. The complex forms a toroidal hexameric ring with the proposed subunit order MCM2-MCM6-MCM4-MCM7-MCM3-MCM5. Component of the CMG helicase complex, a hexameric ring of related MCM2-7 subunits stabilized by CDC45 and the tetrameric GINS complex. Interacts with the ATR-ATRIP complex and with RAD17. Interacts with TIPIN. Interacts with MCMBP. Interacts with ANKRD17. Component of the replisome complex composed of at least DONSON, MCM2, MCM7, PCNA and TICRR. O-glycosylated (O-GlcNAcylated), in a cell cycle-dependent manner. Post-translationally, ubiquitinated by ECS(LRR1) E3 ubiquitin-protein ligase complex when forks converge following formation of DNA interstrand cross-links. During mitosis, ubiquitinated by TRAIP when forks converge following formation of DNA interstrand cross-links. Short ubiquitin chains on MCM7 promote recruitment of DNA glycosylase NEIL3. If the interstrand cross-link cannot be cleaved by NEIL3, the ubiquitin chains continue to grow on MCM7, promoting the unloading of the CMG helicase complex by the VCP/p97 ATPase.

It localises to the nucleus. Its subcellular location is the chromosome. It catalyses the reaction ATP + H2O = ADP + phosphate + H(+). Functionally, acts as a component of the MCM2-7 complex (MCM complex) which is the replicative helicase essential for 'once per cell cycle' DNA replication initiation and elongation in eukaryotic cells. Core component of CDC45-MCM-GINS (CMG) helicase, the molecular machine that unwinds template DNA during replication, and around which the replisome is built. The active ATPase sites in the MCM2-7 ring are formed through the interaction surfaces of two neighboring subunits such that a critical structure of a conserved arginine finger motif is provided in trans relative to the ATP-binding site of the Walker A box of the adjacent subunit. The six ATPase active sites, however, are likely to contribute differentially to the complex helicase activity. Uncomplexed form does not show ATPase or DNA helicase. Required for S-phase checkpoint activation upon UV-induced damage. This Mus musculus (Mouse) protein is DNA replication licensing factor MCM7 (Mcm7).